The sequence spans 142 residues: Large ribosomal subunit protein bL21 (142 aa).

Residues 74 to 84 (RRRQNSKRTRG) are compositionally biased toward basic residues. Residues 74 to 142 (RRRQNSKRTR…KAAAKAESAE (69 aa)) form a disordered region. The segment covering 107 to 125 (KAAEKKAPKADAAEGEAAK) has biased composition (basic and acidic residues). Over residues 126–135 (PKKAAPKKAA) the composition is skewed to basic residues.

The protein belongs to the bacterial ribosomal protein bL21 family. As to quaternary structure, part of the 50S ribosomal subunit. Contacts protein L20.

Functionally, this protein binds to 23S rRNA in the presence of protein L20. The polypeptide is Large ribosomal subunit protein bL21 (Brucella melitensis biotype 2 (strain ATCC 23457)).